The following is a 180-amino-acid chain: ADP-ribosylation factor 4 (180 aa).

The N-myristoyl glycine moiety is linked to residue Gly2. GTP-binding positions include 24–31 (GLDAAGKT), 67–71 (DVGGQ), and 126–129 (NKQD). Ser147 carries the phosphoserine modification.

The protein belongs to the small GTPase superfamily. Arf family. As to quaternary structure, forms a complex containing RAB11A, ASAP1, RAB3IP, RAP11FIP3 and ARF4; the complex promotes preciliary trafficking; the complex binds to RHO in photoreceptor cells and promotes RHO ciliary transport.

It localises to the golgi apparatus. Its subcellular location is the membrane. Functionally, GTP-binding protein that functions as an allosteric activator of the cholera toxin catalytic subunit, an ADP-ribosyltransferase. Involved in protein trafficking; may modulate vesicle budding and uncoating within the Golgi apparatus. Part of the ciliary targeting complex containing Rab11, ASAP1, Rabin8/RAB3IP, RAB11FIP3 and ARF4, which direct preciliary vesicle trafficking to mother centriole and ciliogenesis initiation. The sequence is that of ADP-ribosylation factor 4 (ARF4) from Homo sapiens (Human).